We begin with the raw amino-acid sequence, 209 residues long: Holliday junction branch migration complex subunit RuvA (209 aa).

Residues Met1–Ala70 form a domain I region. The tract at residues Ser71 to Asp149 is domain II. The interval Asp149–Gln153 is flexible linker. Residues Pro154 to Thr209 form a domain III region.

Belongs to the RuvA family. Homotetramer. Forms an RuvA(8)-RuvB(12)-Holliday junction (HJ) complex. HJ DNA is sandwiched between 2 RuvA tetramers; dsDNA enters through RuvA and exits via RuvB. An RuvB hexamer assembles on each DNA strand where it exits the tetramer. Each RuvB hexamer is contacted by two RuvA subunits (via domain III) on 2 adjacent RuvB subunits; this complex drives branch migration. In the full resolvosome a probable DNA-RuvA(4)-RuvB(12)-RuvC(2) complex forms which resolves the HJ.

It localises to the cytoplasm. Functionally, the RuvA-RuvB-RuvC complex processes Holliday junction (HJ) DNA during genetic recombination and DNA repair, while the RuvA-RuvB complex plays an important role in the rescue of blocked DNA replication forks via replication fork reversal (RFR). RuvA specifically binds to HJ cruciform DNA, conferring on it an open structure. The RuvB hexamer acts as an ATP-dependent pump, pulling dsDNA into and through the RuvAB complex. HJ branch migration allows RuvC to scan DNA until it finds its consensus sequence, where it cleaves and resolves the cruciform DNA. The chain is Holliday junction branch migration complex subunit RuvA from Picosynechococcus sp. (strain ATCC 27264 / PCC 7002 / PR-6) (Agmenellum quadruplicatum).